Reading from the N-terminus, the 619-residue chain is Zinc finger CCCH domain-containing protein 67 (619 aa).

ANK repeat units lie at residues 52-81 (EPLT…LVDP) and 88-120 (SLST…DPAL). C3H1-type zinc fingers lie at residues 213 to 241 (HYSC…HGVF) and 249 to 273 (QYRT…HTPD). The segment at 308 to 341 (SPGSSSFTPPLSPSAGGGGGGGGGSGGGGAWPQQ) is disordered. A compositionally biased stretch (gly residues) spans 322–337 (AGGGGGGGGGSGGGGA).

This is Zinc finger CCCH domain-containing protein 67 from Oryza sativa subsp. japonica (Rice).